A 690-amino-acid polypeptide reads, in one-letter code: MTKKILLIEIGTEELPARLLSKISLYFYKNFIKELDFHNISYKNIKYFSTPRRLALKIKDIDITERFVEIKKRGPSIINSYDKDGFLTEAATRWLKHCGININQAIRLKNEKGEWLFYKTRKKQENIESLIPKITESALKNISIKKSMRWGQDNQKFSRPIRNIVILLDKKVIPGDVFNITSKNLLQNHLSLKDSQIKIKDAKDYPKILLEKNNIIADYFIRKEKIIEDIENIAKKIKGFIKKNNVLIEEVTALVESPKALLVNFQEKFLQIPKKILINTIEKKQKCFPIYNSEKKLLPYFIFISNIQTQESEKIIIGNQRVMHARLSDAEFFFKNDRKVKLESRLLSLKKVLFQNNLGSLYEKTLRIKLLIKWIAKYSSSDVEDSIRAALLSKCDLVTDVVCEFPELQGKIGMYYALEDKEKKDVATALEEQYLPRFSGDKLPCTLIGCGLSIADKMDTLSGMFYIGNIPSSDKDPFALRRLAIGIIRIILEKNIPLNLEDLIKKSLSLYNKKNEEDLILFDKMIKFFMIRLFHWYEETGYSAKIIKSVLSCKSIELIDIHKKIQAISFFKKLKDSQSIILSIKRISNILAKEKEKINGDINKKLMIEKEEIILFNNIEEFDNYTKNLFLEKKYNDILIKIKSFENPIYNFFKKVKIYHSDSKIRLNRLLLLSKLKKIFFKIADFSYLY.

The protein belongs to the class-II aminoacyl-tRNA synthetase family. In terms of assembly, tetramer of two alpha and two beta subunits.

It localises to the cytoplasm. The enzyme catalyses tRNA(Gly) + glycine + ATP = glycyl-tRNA(Gly) + AMP + diphosphate. In Buchnera aphidicola subsp. Acyrthosiphon pisum (strain Tuc7), this protein is Glycine--tRNA ligase beta subunit.